A 441-amino-acid polypeptide reads, in one-letter code: Protein MPE1 (441 aa).

The region spanning 5–78 (IFYRFKSQRN…STSVIVKRSP (74 aa)) is the DWNN domain. Residues 180-197 (YMCYRCGGRDHWIKNCPT) form a CCHC-type zinc finger. Position 221 is a phosphoserine (S221). Basic and acidic residues predominate over residues 355–364 (KKQEELHGSS). A disordered region spans residues 355–400 (KKQEELHGSSKDGNQPETKKMKLMDPTGTAGLNNNTSLPTSVNNGG). The span at 384 to 400 (AGLNNNTSLPTSVNNGG) shows a compositional bias: polar residues.

As to quaternary structure, component of the cleavage and polyadenylation factor (CPF) complex, which is composed of PTI1, SYC1, SSU72, GLC7, MPE1, REF2, PFS2, PTA1, YSH1/BRR5, SWD2, CFT2/YDH1, YTH1, CFT1/YHH1, FIP1 and PAP1.

The protein resides in the nucleus. Functionally, component of the cleavage and polyadenylation factor (CPF) complex, which plays a key role in polyadenylation-dependent pre-mRNA 3'-end formation and cooperates with cleavage factors including the CFIA complex and NAB4/CFIB. The protein is Protein MPE1 (MPE1) of Saccharomyces cerevisiae (strain ATCC 204508 / S288c) (Baker's yeast).